Here is a 214-residue protein sequence, read N- to C-terminus: MRIILLGAPGAGKGTQAQFIMEKYGIPQMCTGDMLRAAVKAGSELGLKAKEIMDAGKLVTHELVIALVKERITQDDCRDGFLLHGFPRTIPQADAMKEAGIKVDYVLEFDVPDELIVDRIVGRRVHAASGRVYHIKFNPPKVEDKDDVTGEELTIRKDDQEATVRKRLVEYHQQTAPLVSYYRKEADAGNTQYFKLDGTRKVAEVSAELATILG.

An ATP-binding site is contributed by 10 to 15 (GAGKGT). The interval 30-59 (CTGDMLRAAVKAGSELGLKAKEIMDAGKLV) is NMP. Residues T31, R36, 57–59 (KLV), 85–88 (GFPR), and Q92 contribute to the AMP site. Residues 122–159 (GRRVHAASGRVYHIKFNPPKVEDKDDVTGEELTIRKDD) form an LID region. ATP contacts are provided by residues R123 and 132–133 (VY). The AMP site is built by R156 and R167. Residue R200 coordinates ATP.

Belongs to the adenylate kinase family. Monomer.

It is found in the cytoplasm. The catalysed reaction is AMP + ATP = 2 ADP. It participates in purine metabolism; AMP biosynthesis via salvage pathway; AMP from ADP: step 1/1. Its function is as follows. Catalyzes the reversible transfer of the terminal phosphate group between ATP and AMP. Plays an important role in cellular energy homeostasis and in adenine nucleotide metabolism. This chain is Adenylate kinase, found in Yersinia enterocolitica.